Here is a 118-residue protein sequence, read N- to C-terminus: MTKLKMLSMLTVMIASLFIFSSQALAVQYFTVSTSSGAPVNMRSGPGTNYPIMLSIPSGSRVPYYCYAYGTTVTGKYGTSNIWDQIQWKDSRGVVNIGYVSDTYVYTGSDGPVGYKCN.

An N-terminal signal peptide occupies residues 1 to 26 (MTKLKMLSMLTVMIASLFIFSSQALA). In terms of domain architecture, SH3b spans 30-104 (FTVSTSSGAP…VNIGYVSDTY (75 aa)).

The protein to B.subtilis YraI.

This is an uncharacterized protein from Bacillus subtilis (strain 168).